The following is a 142-amino-acid chain: Large ribosomal subunit protein uL11 (142 aa).

This sequence belongs to the universal ribosomal protein uL11 family. In terms of assembly, part of the ribosomal stalk of the 50S ribosomal subunit. Interacts with L10 and the large rRNA to form the base of the stalk. L10 forms an elongated spine to which L12 dimers bind in a sequential fashion forming a multimeric L10(L12)X complex. Post-translationally, one or more lysine residues are methylated.

Its function is as follows. Forms part of the ribosomal stalk which helps the ribosome interact with GTP-bound translation factors. In Klebsiella pneumoniae (strain 342), this protein is Large ribosomal subunit protein uL11.